The sequence spans 506 residues: BTB/POZ domain and ankyrin repeat-containing protein NPR5 (506 aa).

A BTB domain is found at 23 to 131 (SDVTFSVEGR…LYSGQVSLVP (109 aa)). The C2HC NPR-type zinc-finger motif lies at 137–151 (RPGCGERGCWHTHCA). Residues C140, C145, H147, and C150 each contribute to the Zn(2+) site. ANK repeat units lie at residues 278 to 306 (HKIR…GLNL), 307 to 337 (DDAL…DVNH), 342 to 371 (AGKT…DPNV), and 375 to 409 (DGVT…KLRL). The tract at residues 481-506 (KMNDGGDGDDGGSRGPSSLFSPHGFP) is disordered.

It belongs to the plant 'ANKYRIN-BTB/POZ' family. 'NOOT-BOP-COCH-like' (NBCL) subfamily. As to quaternary structure, homodimer. Interacts with TGAL5, TGAL7, TGAL8 and TGAL11.

Its subcellular location is the nucleus. It is found in the cytoplasm. Its pathway is protein modification; protein ubiquitination. Functionally, may act as a substrate-specific adapter of an E3 ubiquitin-protein ligase complex (CUL3-RBX1-BTB) which mediates the ubiquitination and subsequent proteasomal degradation of target proteins. Transcriptional co-regulator involved in the promotion of leaf and floral meristem fate and determinacy. Required for the abscission of senescent organs, probably by regulating the cell wall disorganization in abscission zones (AZs, e.g. pulvini at the base of leaves). Maybe involved in defense response against pathogens. This is BTB/POZ domain and ankyrin repeat-containing protein NPR5 from Oryza sativa subsp. japonica (Rice).